A 203-amino-acid chain; its full sequence is Holliday junction branch migration complex subunit RuvA (203 aa).

The domain I stretch occupies residues 1–63 (MIGKLSGRVD…EDHINLYGFL (63 aa)). The domain II stretch occupies residues 64–142 (SLEEKSFFNL…KISSSSAAIK (79 aa)). The flexible linker stretch occupies residues 143-149 (DSLNIKG). The segment at 150–203 (ITPVASSEVIKALINMGFSRFEAQNAVQEIITKNPEISIDELIRTALKNRNSNF) is domain III.

The protein belongs to the RuvA family. In terms of assembly, homotetramer. Forms an RuvA(8)-RuvB(12)-Holliday junction (HJ) complex. HJ DNA is sandwiched between 2 RuvA tetramers; dsDNA enters through RuvA and exits via RuvB. An RuvB hexamer assembles on each DNA strand where it exits the tetramer. Each RuvB hexamer is contacted by two RuvA subunits (via domain III) on 2 adjacent RuvB subunits; this complex drives branch migration. In the full resolvosome a probable DNA-RuvA(4)-RuvB(12)-RuvC(2) complex forms which resolves the HJ.

The protein localises to the cytoplasm. Functionally, the RuvA-RuvB-RuvC complex processes Holliday junction (HJ) DNA during genetic recombination and DNA repair, while the RuvA-RuvB complex plays an important role in the rescue of blocked DNA replication forks via replication fork reversal (RFR). RuvA specifically binds to HJ cruciform DNA, conferring on it an open structure. The RuvB hexamer acts as an ATP-dependent pump, pulling dsDNA into and through the RuvAB complex. HJ branch migration allows RuvC to scan DNA until it finds its consensus sequence, where it cleaves and resolves the cruciform DNA. The sequence is that of Holliday junction branch migration complex subunit RuvA from Rickettsia bellii (strain OSU 85-389).